Here is a 151-residue protein sequence, read N- to C-terminus: Ribosome maturation factor RimP (151 aa).

This sequence belongs to the RimP family.

The protein resides in the cytoplasm. In terms of biological role, required for maturation of 30S ribosomal subunits. The chain is Ribosome maturation factor RimP from Shewanella woodyi (strain ATCC 51908 / MS32).